The primary structure comprises 185 residues: Peptidyl-tRNA hydrolase (185 aa).

Phenylalanine 12 serves as a coordination point for tRNA. Histidine 17 serves as the catalytic Proton acceptor. TRNA contacts are provided by tyrosine 61, asparagine 63, and asparagine 109.

The protein belongs to the PTH family. As to quaternary structure, monomer.

It localises to the cytoplasm. The catalysed reaction is an N-acyl-L-alpha-aminoacyl-tRNA + H2O = an N-acyl-L-amino acid + a tRNA + H(+). Functionally, hydrolyzes ribosome-free peptidyl-tRNAs (with 1 or more amino acids incorporated), which drop off the ribosome during protein synthesis, or as a result of ribosome stalling. Its function is as follows. Catalyzes the release of premature peptidyl moieties from peptidyl-tRNA molecules trapped in stalled 50S ribosomal subunits, and thus maintains levels of free tRNAs and 50S ribosomes. This chain is Peptidyl-tRNA hydrolase, found in Borrelia garinii subsp. bavariensis (strain ATCC BAA-2496 / DSM 23469 / PBi) (Borreliella bavariensis).